The primary structure comprises 209 residues: Ribosomal RNA large subunit methyltransferase E (209 aa).

Residues G63, W65, D83, D99, and D124 each contribute to the S-adenosyl-L-methionine site. K164 (proton acceptor) is an active-site residue. The 19-residue stretch at 191 to 209 (EASRGRSREVYIVATGYKG) folds into the TRAM domain.

It belongs to the class I-like SAM-binding methyltransferase superfamily. RNA methyltransferase RlmE family.

The protein localises to the cytoplasm. The catalysed reaction is uridine(2552) in 23S rRNA + S-adenosyl-L-methionine = 2'-O-methyluridine(2552) in 23S rRNA + S-adenosyl-L-homocysteine + H(+). Functionally, specifically methylates the uridine in position 2552 of 23S rRNA at the 2'-O position of the ribose in the fully assembled 50S ribosomal subunit. This Haemophilus influenzae (strain 86-028NP) protein is Ribosomal RNA large subunit methyltransferase E.